We begin with the raw amino-acid sequence, 186 residues long: uncharacterized protein (186 aa).

This is an uncharacterized protein from Trypanosoma brucei brucei.